The chain runs to 72 residues: V-type proton ATPase subunit e (72 aa).

The Lumenal portion of the chain corresponds to 1–2 (MS). A helical transmembrane segment spans residues 3 to 23 (FYTVVATFLSVVLASAVFWVL). The Cytoplasmic portion of the chain corresponds to 24–34 (APKENQTVWRS). Residues 35-55 (TIILSMSMMFLMWAVTYLSQL) form a helical membrane-spanning segment. Residues 56-72 (HPLVVPRRSDLRPEFAE) lie on the Lumenal side of the membrane.

It belongs to the V-ATPase e1/e2 subunit family. In terms of assembly, V-ATPase is a heteromultimeric enzyme composed of a peripheral catalytic V1 complex (components A to H) attached to an integral membrane V0 proton pore complex (components: a, c, c', c'', d, e, f and VOA1).

It localises to the vacuole membrane. In terms of biological role, subunit of the V0 complex of vacuolar(H+)-ATPase (V-ATPase), a multisubunit enzyme composed of a peripheral complex (V1) that hydrolyzes ATP and a membrane integral complex (V0) that translocates protons. V-ATPase is responsible for acidifying and maintaining the pH of intracellular compartments. In Eremothecium gossypii (strain ATCC 10895 / CBS 109.51 / FGSC 9923 / NRRL Y-1056) (Yeast), this protein is V-type proton ATPase subunit e (VMA9).